The following is a 251-amino-acid chain: MWRLLARASAPLLRVPLSDSWALLPASAGVKTLLPVPSFEDVSIPEKPKLRFIERAPLVPKVRREPKNLSDIRGPSTEATEFTEGNFAILALGGGYLHWGHFEMMRLTINRSMDPKNMFAIWRVPAPFKPITRKSVGHRMGGGKGAIDHYVTPVKAGRLVVEMGGRCEFEEVQGFLDQVAHKLPFAAKAVSRGTLEKMRKDQEERERNNQNPWTFERIATANMLGIRKVLSPYDLTHKGKYWGKFYMPKRV.

Residues 1 to 29 constitute a mitochondrion transit peptide; that stretch reads MWRLLARASAPLLRVPLSDSWALLPASAG.

This sequence belongs to the universal ribosomal protein uL16 family. In terms of assembly, component of the mitochondrial large ribosomal subunit (mt-LSU). Mature mammalian 55S mitochondrial ribosomes consist of a small (28S) and a large (39S) subunit. The 28S small subunit contains a 12S ribosomal RNA (12S mt-rRNA) and 30 different proteins. The 39S large subunit contains a 16S rRNA (16S mt-rRNA), a copy of mitochondrial valine transfer RNA (mt-tRNA(Val)), which plays an integral structural role, and 52 different proteins.

The protein resides in the mitochondrion. The sequence is that of Large ribosomal subunit protein uL16m (MRPL16) from Homo sapiens (Human).